Here is a 262-residue protein sequence, read N- to C-terminus: Probable carboxylesterase SOBER1-like (262 aa).

Residues Ser-151, Asp-205, and His-237 each act as charge relay system in the active site.

This sequence belongs to the AB hydrolase superfamily. AB hydrolase 2 family.

In terms of biological role, carboxylesterase. The protein is Probable carboxylesterase SOBER1-like of Arabidopsis thaliana (Mouse-ear cress).